The following is a 629-amino-acid chain: Methyl-accepting chemotaxis protein PctB (629 aa).

Topologically, residues 1–10 are cytoplasmic; the sequence is MIKSLKFSHK. A helical transmembrane segment spans residues 11 to 31; sequence ILLAAALVVIATFSLFTLYND. The Periplasmic portion of the chain corresponds to 32-276; that stretch reads SLQRASIRED…AYAMLTKLRT (245 aa). In terms of domain architecture, Cache spans 37–260; it reads SIREDLEDYL…LSGLDWYIGI (224 aa). L-arginine contacts are provided by residues tyrosine 109, serine 115, tyrosine 121, 126–128, glutamate 146, and aspartate 173; that span reads RPW. Residues serine 115, tyrosine 121, 126–128, 144–146, and aspartate 173 contribute to the L-glutamine site; these read RPW and YME. A helical membrane pass occupies residues 277–297; the sequence is SAIVAALIAVVAIVLLLGMLI. The HAMP domain occupies 298–352; that stretch reads RVLMQPLTDMGRAMQDIAQGEGDLTKRLKVTSNDEFGALAISFNRFVERIHESIR. At 298–629 the chain is on the cytoplasmic side; that stretch reads RVLMQPLTDM…LRQLVDSFKI (332 aa). A Methyl-accepting transducer domain is found at 357-593; it reads TARQLHDVAQ…SLNMDITEIN (237 aa). Residues 405–424 form a disordered region; that stretch reads RNAADASHHASDANHQAEDG. The segment covering 410-424 has biased composition (basic and acidic residues); that stretch reads ASHHASDANHQAEDG.

Belongs to the methyl-accepting chemotaxis (MCP) protein family. In terms of assembly, monomer in the absence and presence of ligands.

The protein localises to the cell inner membrane. Functionally, chemotactic-signal transducers respond to changes in the concentration of attractants and repellents in the environment, transduce a signal from the outside to the inside of the cell, and facilitate sensory adaptation through the variation of the level of methylation. Responds to L-Arg, L-Gln, L-Ala, L-Glu, L-Lys, L-Met and L-Tyr. Also involved in repellent responses to trichloroethylene (TCE), chloroform and methylthiocyanate. This chain is Methyl-accepting chemotaxis protein PctB (pctB), found in Pseudomonas aeruginosa (strain ATCC 15692 / DSM 22644 / CIP 104116 / JCM 14847 / LMG 12228 / 1C / PRS 101 / PAO1).